The sequence spans 144 residues: Maximins 7/H6 (144 aa).

An N-terminal signal peptide occupies residues 1-18 (MNFKYIVAVSFLIASAYA). Positions 19 to 43 (RSEENDEQSLSQRDILEEESLREIR) are excised as a propeptide. The residue at position 70 (asparagine 70) is an Asparagine amide. Positions 74–123 (TAEDHEVMKRLEAVMRDLDSLDYPEEAAERETRGFNQEEIANLFTKKEKR) are excised as a propeptide. The residue at position 143 (leucine 143) is a Leucine amide.

Belongs to the bombinin family. Expressed by the skin glands.

The protein resides in the secreted. Functionally, maximin-7 shows antimicrobial activity against bacteria and against the fungus C.albicans. It has little hemolytic activity. Its function is as follows. Maximin-H6 shows antimicrobial activity against bacteria and against the fungus C.albicans. Shows strong hemolytic activity. The sequence is that of Maximins 7/H6 from Bombina maxima (Giant fire-bellied toad).